Consider the following 183-residue polypeptide: ATP synthase subunit b, chloroplastic (183 aa).

The chain crosses the membrane as a helical span at residues 28-48; the sequence is DIFEANVINILLLLFGLIYVL.

Belongs to the ATPase B chain family. In terms of assembly, F-type ATPases have 2 components, F(1) - the catalytic core - and F(0) - the membrane proton channel. F(1) has five subunits: alpha(3), beta(3), gamma(1), delta(1), epsilon(1). F(0) has four main subunits: a(1), b(1), b'(1) and c(10-14). The alpha and beta chains form an alternating ring which encloses part of the gamma chain. F(1) is attached to F(0) by a central stalk formed by the gamma and epsilon chains, while a peripheral stalk is formed by the delta, b and b' chains.

It localises to the plastid. It is found in the chloroplast thylakoid membrane. Its function is as follows. F(1)F(0) ATP synthase produces ATP from ADP in the presence of a proton or sodium gradient. F-type ATPases consist of two structural domains, F(1) containing the extramembraneous catalytic core and F(0) containing the membrane proton channel, linked together by a central stalk and a peripheral stalk. During catalysis, ATP synthesis in the catalytic domain of F(1) is coupled via a rotary mechanism of the central stalk subunits to proton translocation. In terms of biological role, component of the F(0) channel, it forms part of the peripheral stalk, linking F(1) to F(0). The chain is ATP synthase subunit b, chloroplastic from Porphyra purpurea (Red seaweed).